The sequence spans 3672 residues: Laminin-like protein epi-1 (3672 aa).

The first 27 residues, 1–27, serve as a signal peptide directing secretion; it reads MSPYDSSPWATKALFLIVTLLAQFTYS. In terms of domain architecture, Laminin N-terminal spans 28 to 297; that stretch reads QVLTPSQITI…AIKEIMIGGR (270 aa). N-linked (GlcNAc...) asparagine glycosylation is found at Asn-121, Asn-140, and Asn-249. Disulfide bonds link Cys-298–Cys-307, Cys-300–Cys-320, Cys-322–Cys-331, Cys-334–Cys-354, Cys-357–Cys-366, Cys-359–Cys-391, Cys-394–Cys-403, Cys-406–Cys-424, Cys-427–Cys-438, Cys-429–Cys-445, Cys-447–Cys-456, Cys-459–Cys-469, Cys-472–Cys-484, Cys-474–Cys-491, Cys-493–Cys-502, Cys-505–Cys-516, Cys-519–Cys-531, Cys-521–Cys-538, Cys-540–Cys-549, Cys-552–Cys-561, Cys-564–Cys-576, Cys-566–Cys-583, Cys-585–Cys-594, Cys-597–Cys-607, Cys-610–Cys-622, Cys-612–Cys-629, Cys-631–Cys-640, Cys-643–Cys-653, Cys-656–Cys-668, Cys-658–Cys-674, Cys-676–Cys-685, Cys-688–Cys-698, Cys-701–Cys-715, Cys-703–Cys-724, Cys-726–Cys-735, Cys-738–Cys-753, Cys-756–Cys-770, Cys-758–Cys-777, Cys-779–Cys-788, Cys-791–Cys-806, Cys-809–Cys-821, Cys-811–Cys-828, and Cys-830–Cys-839. Laminin EGF-like domains lie at 298–356, 357–426, 427–471, 472–518, 519–563, 564–609, 610–655, 656–700, 701–755, and 756–808; these read CVCN…TCEA, CNCF…PCKV, CDCD…KCKP, CECN…GCVE, CVCD…DCKF, CNCD…NCKA, CACD…DCRG, CECL…ICEE, CNCN…GCRS, and CDCN…GCES. N-linked (GlcNAc...) asparagine glycosylation occurs at Asn-351. N-linked (GlcNAc...) asparagine glycosylation is present at Asn-477. N-linked (GlcNAc...) asparagine glycans are attached at residues Asn-511 and Asn-530. A glycan (N-linked (GlcNAc...) asparagine) is linked at Asn-634. Asn-761 carries N-linked (GlcNAc...) asparagine glycosylation. The region spanning 809-839 is the Laminin EGF-like 11; truncated domain; that stretch reads CHCDIGGALRAECDITSGQCKCRPRVTGLRC. 2 N-linked (GlcNAc...) asparagine glycosylation sites follow: Asn-1014 and Asn-1341. Cystine bridges form between Cys-1415–Cys-1427, Cys-1417–Cys-1434, Cys-1436–Cys-1445, Cys-1448–Cys-1458, Cys-1461–Cys-1469, Cys-1463–Cys-1476, Cys-1478–Cys-1487, Cys-1490–Cys-1503, Cys-1506–Cys-1520, Cys-1508–Cys-1527, Cys-1529–Cys-1538, Cys-1541–Cys-1551, Cys-1554–Cys-1566, Cys-1556–Cys-1573, Cys-1575–Cys-1584, and Cys-1587–Cys-1602. Laminin EGF-like domains lie at 1415–1460, 1461–1505, 1506–1553, and 1554–1604; these read CDCV…ECIK, CQCN…GCQK, CGCH…HCYG, and CSCN…GCVN. The Laminin EGF-like 16; first part domain occupies 1605 to 1614; sequence CFCFGVTDSC. One can recognise a Laminin IV type A domain in the interval 1615 to 1796; sequence RSSMYPVTIM…SVIKASSVEQ (182 aa). N-linked (GlcNAc...) asparagine glycosylation is found at Asn-1705 and Asn-1756. Positions 1797-1829 constitute a Laminin EGF-like 16; second part domain; the sequence is CQCPAPYTGPSCQLCASGYHRVQSGSFLGACVP. Intrachain disulfides connect Cys-1830/Cys-1839, Cys-1832/Cys-1846, Cys-1849/Cys-1858, Cys-1861/Cys-1877, Cys-1880/Cys-1894, Cys-1882/Cys-1905, Cys-1907/Cys-1916, Cys-1919/Cys-1934, Cys-1937/Cys-1951, Cys-1939/Cys-1958, Cys-1961/Cys-1970, Cys-1973/Cys-1987, Cys-1990/Cys-2000, Cys-1992/Cys-2007, Cys-2009/Cys-2018, Cys-2021/Cys-2031, Cys-2037/Cys-2048, Cys-2039/Cys-2055, Cys-2057/Cys-2066, Cys-2069/Cys-2081, Cys-2084/Cys-2096, Cys-2086/Cys-2103, Cys-2105/Cys-2114, and Cys-2117/Cys-2129. Laminin EGF-like domains lie at 1830-1879, 1880-1936, 1937-1989, 1990-2036, 2037-2083, and 2084-2131; these read CECN…DCMA, CACP…SCSP, CQCN…NCSS, CECS…GCQG, CHCG…GCDK, and CDCE…GCRR. N-linked (GlcNAc...) asparagine glycosylation occurs at Asn-1868. Asn-1944 carries an N-linked (GlcNAc...) asparagine glycan. Residue Asn-1986 is glycosylated (N-linked (GlcNAc...) asparagine). N-linked (GlcNAc...) asparagine glycosylation is present at Asn-2002. N-linked (GlcNAc...) asparagine glycosylation is found at Asn-2159, Asn-2207, Asn-2231, Asn-2235, Asn-2401, Asn-2421, Asn-2487, and Asn-2821. 3 consecutive Laminin G-like domains span residues 2693–2884, 2896–3066, and 3072–3235; these read GAHF…VNGA, ELVV…RSGC, and RTVS…LNGC. Cys-3040 and Cys-3066 are joined by a disulfide. A glycan (N-linked (GlcNAc...) asparagine) is linked at Asn-3087. Cys-3209 and Cys-3235 form a disulfide bridge. Residues 3236–3294 are disordered; it reads SLSDDENISTTTTAAPKPTDDSDVAVLPIDEEEESTTTTTTTTTEEPTEEPAEARPDGH. The N-linked (GlcNAc...) asparagine glycan is linked to Asn-3242. The segment covering 3271-3280 has biased composition (low complexity); it reads TTTTTTTTTE. Laminin G-like domains lie at 3310–3482 and 3488–3669; these read GFNF…TEQC and PGMY…RNAC. Cys-3460 and Cys-3482 form a disulfide bridge. A glycan (N-linked (GlcNAc...) asparagine) is linked at Asn-3541. The cysteines at positions 3633 and 3669 are disulfide-linked.

As to quaternary structure, laminin is a complex glycoprotein, consisting of three different polypeptide chains (alpha, beta, gamma), which are bound to each other by disulfide bonds into a cross-shaped molecule comprising one long and three short arms with globules at each end.

The protein localises to the secreted. The protein resides in the extracellular space. It localises to the extracellular matrix. It is found in the basement membrane. Binding to cells via a high affinity receptor, laminin is thought to mediate the attachment, migration and organization of cells into tissues during embryonic development by interacting with other extracellular matrix components. Required to assemble a stable basement membrane and for organizing receptor complexes and cytoskeletal components to the proper cell surfaces. During embryogenesis, does not require the presence of collagen type IV in order to associate with cell surfaces, prior to assembly of the prototypical basement membrane. During the formation of neuromuscular junctions at the larval stage, negatively regulates membrane protrusion from body wall muscles, probably downstream of the integrin complex formed by pat-2 and pat-3. Probably plays a distinct role from the related laminin subunit alpha lam-3. The chain is Laminin-like protein epi-1 (epi-1) from Caenorhabditis elegans.